The sequence spans 222 residues: Probable septum site-determining protein MinC (222 aa).

This sequence belongs to the MinC family. Interacts with MinD and FtsZ.

Its function is as follows. Cell division inhibitor that blocks the formation of polar Z ring septums. Rapidly oscillates between the poles of the cell to destabilize FtsZ filaments that have formed before they mature into polar Z rings. Prevents FtsZ polymerization. This is Probable septum site-determining protein MinC from Lysinibacillus sphaericus (strain C3-41).